A 542-amino-acid polypeptide reads, in one-letter code: Phosphoacetylglucosamine mutase (542 aa).

N-acetylmethionine is present on M1. At T62 the chain carries Phosphothreonine. Residue S64 is the Phosphoserine intermediate of the active site. Mg(2+) is bound by residues S64, D276, D278, and D280. Phosphoserine is present on S64. Substrate contacts are provided by residues 370–372 (EAN), 496–500 (RPSGT), and R505.

The protein belongs to the phosphohexose mutase family. Mg(2+) serves as cofactor.

The enzyme catalyses N-acetyl-alpha-D-glucosamine 1-phosphate = N-acetyl-D-glucosamine 6-phosphate. Its pathway is nucleotide-sugar biosynthesis; UDP-N-acetyl-alpha-D-glucosamine biosynthesis; N-acetyl-alpha-D-glucosamine 1-phosphate from alpha-D-glucosamine 6-phosphate (route I): step 2/2. Catalyzes the conversion of GlcNAc-6-P into GlcNAc-1-P during the synthesis of uridine diphosphate/UDP-GlcNAc, a sugar nucleotide critical to multiple glycosylation pathways including protein N- and O-glycosylation. In Mus musculus (Mouse), this protein is Phosphoacetylglucosamine mutase.